Reading from the N-terminus, the 294-residue chain is 4-hydroxy-tetrahydrodipicolinate synthase (294 aa).

Threonine 47 is a binding site for pyruvate. Catalysis depends on tyrosine 135, which acts as the Proton donor/acceptor. Lysine 163 (schiff-base intermediate with substrate) is an active-site residue. Valine 205 contacts pyruvate.

The protein belongs to the DapA family. As to quaternary structure, homotetramer; dimer of dimers.

Its subcellular location is the cytoplasm. The catalysed reaction is L-aspartate 4-semialdehyde + pyruvate = (2S,4S)-4-hydroxy-2,3,4,5-tetrahydrodipicolinate + H2O + H(+). It functions in the pathway amino-acid biosynthesis; L-lysine biosynthesis via DAP pathway; (S)-tetrahydrodipicolinate from L-aspartate: step 3/4. In terms of biological role, catalyzes the condensation of (S)-aspartate-beta-semialdehyde [(S)-ASA] and pyruvate to 4-hydroxy-tetrahydrodipicolinate (HTPA). This Rickettsia canadensis (strain McKiel) protein is 4-hydroxy-tetrahydrodipicolinate synthase.